The sequence spans 634 residues: Alpha-L-iduronidase (634 aa).

Positions 1-16 (MLTFFAAFLAAPLALA) are cleaved as a signal peptide. 3 residues coordinate alpha-D-mannopyranose: Pro44, Leu46, and His48. His81 contributes to the alpha-L-iduronate binding site. Asn100 carries an N-linked (GlcNAc...) asparagine glycan. Alpha-L-iduronate is bound by residues Asn171 and Glu172. Glu172 (proton donor) is an active-site residue. N-linked (GlcNAc...) asparagine glycosylation is found at Asn180 and Asn233. 3 residues coordinate alpha-L-iduronate: Lys254, Glu289, and Gly295. Glu289 (nucleophile) is an active-site residue. Trp296 lines the alpha-D-mannopyranose pocket. Residue Asn326 is glycosylated (N-linked (GlcNAc...) asparagine). Asp339 and Arg353 together coordinate alpha-L-iduronate. 3 N-linked (GlcNAc...) asparagine glycosylation sites follow: Asn362, Asn405, and Asn441. A disulfide bridge links Cys531 with Cys567.

This sequence belongs to the glycosyl hydrolase 39 family. Monomer. In terms of processing, N-glycosylation contributes to substrate binding and is required for full enzymatic activity. In terms of tissue distribution, ubiquitous.

It is found in the lysosome. The enzyme catalyses Hydrolysis of unsulfated alpha-L-iduronosidic linkages in dermatan sulfate.. The sequence is that of Alpha-L-iduronidase (Idua) from Mus musculus (Mouse).